The primary structure comprises 291 residues: Probable protein S-acyltransferase 12 (291 aa).

A run of 2 helical transmembrane segments spans residues 14–34 and 49–69; these read GYFMILLVVAVVGVSYYAVVV and LSALAALIIFVFHFLLIMLLW. The region spanning 111–161 is the DHHC domain; the sequence is GYCTKCRNVKPPRCHHCSVCQRCVLKMDHHCVWIVNCVGARNYKFFLLFLF. C141 functions as the S-palmitoyl cysteine intermediate in the catalytic mechanism. The next 2 membrane-spanning stretches (helical) occupy residues 155-175 and 198-218; these read FFLLFLFYTFLETMLDVIVLL and LVLAFVLNFAFVLSLLCFVVM.

It belongs to the DHHC palmitoyltransferase family.

It localises to the cell membrane. It carries out the reaction L-cysteinyl-[protein] + hexadecanoyl-CoA = S-hexadecanoyl-L-cysteinyl-[protein] + CoA. Functionally, palmitoyl acyltransferase. This chain is Probable protein S-acyltransferase 12 (PAT12), found in Arabidopsis thaliana (Mouse-ear cress).